We begin with the raw amino-acid sequence, 627 residues long: Translation factor GUF1, mitochondrial (627 aa).

The transit peptide at 1–16 directs the protein to the mitochondrion; the sequence is MSLAWSAGRAWSRQSY. The region spanning 40–221 is the tr-type G domain; sequence ERYRNFCIVA…AVIERIPHPV (182 aa). Residues 49 to 56, 114 to 118, and 168 to 171 each bind GTP; these read AHIDHGKS, DTPGH, and NKID.

The protein belongs to the TRAFAC class translation factor GTPase superfamily. Classic translation factor GTPase family. LepA subfamily.

It is found in the mitochondrion inner membrane. It carries out the reaction GTP + H2O = GDP + phosphate + H(+). In terms of biological role, promotes mitochondrial protein synthesis. May act as a fidelity factor of the translation reaction, by catalyzing a one-codon backward translocation of tRNAs on improperly translocated ribosomes. Binds to mitochondrial ribosomes in a GTP-dependent manner. The sequence is that of Translation factor GUF1, mitochondrial from Fusarium vanettenii (strain ATCC MYA-4622 / CBS 123669 / FGSC 9596 / NRRL 45880 / 77-13-4) (Fusarium solani subsp. pisi).